Reading from the N-terminus, the 390-residue chain is Two-component response regulator ORR29 (390 aa).

The 118-residue stretch at Ser13–Asp130 folds into the Response regulatory domain. Position 65 is a 4-aspartylphosphate (Asp65). A DNA-binding region (myb-like GARP) is located at residues Lys169 to Lys226. Disordered regions lie at residues Phe233–Glu271 and Ser303–His339. The segment covering Asn257 to Glu271 has biased composition (polar residues).

Belongs to the ARR family. Type-B subfamily. Two-component system major event consists of a His-to-Asp phosphorelay between a sensor histidine kinase (HK) and a response regulator (RR). In plants, the His-to-Asp phosphorelay involves an additional intermediate named Histidine-containing phosphotransfer protein (HPt). This multistep phosphorelay consists of a His-Asp-His-Asp sequential transfer of a phosphate group between first a His and an Asp of the HK protein, followed by the transfer to a conserved His of the HPt protein and finally the transfer to an Asp in the receiver domain of the RR protein.

It localises to the nucleus. Transcriptional activator that binds specific DNA sequence. Functions as a response regulator involved in His-to-Asp phosphorelay signal transduction system. Phosphorylation of the Asp residue in the receiver domain activates the ability of the protein to promote the transcription of target genes. May directly activate some type-A response regulators in response to cytokinins. The chain is Two-component response regulator ORR29 from Oryza sativa subsp. indica (Rice).